Consider the following 472-residue polypeptide: Ribulose bisphosphate carboxylase large chain 1 (472 aa).

Substrate-binding residues include Asn-115 and Thr-165. Residue Lys-167 is the Proton acceptor of the active site. Lys-169 lines the substrate pocket. The Mg(2+) site is built by Lys-193, Asp-195, and Glu-196. Lys-193 is modified (N6-carboxylysine). Residue His-286 is the Proton acceptor of the active site. Substrate-binding residues include Arg-287, His-319, and Ser-371.

The protein belongs to the RuBisCO large chain family. Type I subfamily. Heterohexadecamer of 8 large chains and 8 small chains. The cofactor is Mg(2+).

It carries out the reaction 2 (2R)-3-phosphoglycerate + 2 H(+) = D-ribulose 1,5-bisphosphate + CO2 + H2O. It catalyses the reaction D-ribulose 1,5-bisphosphate + O2 = 2-phosphoglycolate + (2R)-3-phosphoglycerate + 2 H(+). In terms of biological role, ruBisCO catalyzes two reactions: the carboxylation of D-ribulose 1,5-bisphosphate, the primary event in carbon dioxide fixation, as well as the oxidative fragmentation of the pentose substrate. Both reactions occur simultaneously and in competition at the same active site. This chain is Ribulose bisphosphate carboxylase large chain 1, found in Hydrogenovibrio marinus.